Consider the following 985-residue polypeptide: Ephrin type-B receptor 1-A (985 aa).

The N-terminal stretch at 1-19 (MELNVLLLLLCLSGGQVGA) is a signal peptide. Residues 20–542 (VEETLMDTRT…YKSELREQLP (523 aa)) lie on the Extracellular side of the membrane. The Eph LBD domain occupies 21 to 203 (EETLMDTRTA…FFKEMPSVVQ (183 aa)). Fibronectin type-III domains are found at residues 324–434 (VPSG…TNQA) and 435–532 (APSS…TAED). Residues asparagine 336, asparagine 428, and asparagine 482 are each glycosylated (N-linked (GlcNAc...) asparagine). Residues 543-563 (LTGSAAAGVVFIVSLVAISIV) form a helical membrane-spanning segment. At 564-985 (CSRKRTYSKE…QITQSPTSIA (422 aa)) the chain is on the cytoplasmic side. Positions 620–883 (VKIEEVIGAG…EIVNTLRPMI (264 aa)) constitute a Protein kinase domain. ATP-binding positions include 626-634 (IGAGEFGEV) and lysine 652. Aspartate 745 acts as the Proton acceptor in catalysis. Residues 912–976 (SAFTSVDDWL…LNSIQSMRVQ (65 aa)) form the SAM domain. Positions 983–985 (SIA) match the PDZ-binding motif.

Belongs to the protein kinase superfamily. Tyr protein kinase family. Ephrin receptor subfamily. In terms of assembly, heterotetramer upon binding of the ligand. The heterotetramer is composed of an ephrin dimer and a receptor dimer. Oligomerization is probably required to induce biological responses. In terms of processing, phosphorylated. Autophosphorylation is stimulated by ligands.

It is found in the cell membrane. Its subcellular location is the early endosome membrane. It localises to the cell projection. The protein localises to the dendrite. It carries out the reaction L-tyrosyl-[protein] + ATP = O-phospho-L-tyrosyl-[protein] + ADP + H(+). Functionally, receptor tyrosine kinase which binds promiscuously transmembrane ephrin-B family ligands residing on adjacent cells, leading to contact-dependent bidirectional signaling into neighboring cells. The signaling pathway downstream of the receptor is referred to as forward signaling while the signaling pathway downstream of the ephrin ligand is referred to as reverse signaling. May play a role in axon guidance during nervous system development. May also play an important redundant role with other ephrin-B receptors in development and maturation of dendritic spines and synapse formation. More generally, may play a role in targeted cell migration and adhesion. Upon activation by ephrin-B ligands activates the MAPK/ERK and the JNK signaling cascades to regulate cell migration and adhesion respectively. The polypeptide is Ephrin type-B receptor 1-A (ephb1-a) (Xenopus laevis (African clawed frog)).